We begin with the raw amino-acid sequence, 323 residues long: tRNA dimethylallyltransferase (323 aa).

12–19 contacts ATP; that stretch reads GPTAAGKT. Residue 14 to 19 coordinates substrate; sequence TAAGKT. Interaction with substrate tRNA regions lie at residues 37–40 and 161–165; these read DSAL and QRLIR.

It belongs to the IPP transferase family. Monomer. Mg(2+) is required as a cofactor.

It carries out the reaction adenosine(37) in tRNA + dimethylallyl diphosphate = N(6)-dimethylallyladenosine(37) in tRNA + diphosphate. Catalyzes the transfer of a dimethylallyl group onto the adenine at position 37 in tRNAs that read codons beginning with uridine, leading to the formation of N6-(dimethylallyl)adenosine (i(6)A). This chain is tRNA dimethylallyltransferase, found in Pseudomonas putida (strain W619).